A 63-amino-acid polypeptide reads, in one-letter code: Large ribosomal subunit protein uL29 (63 aa).

The protein belongs to the universal ribosomal protein uL29 family.

This chain is Large ribosomal subunit protein uL29, found in Psychromonas ingrahamii (strain DSM 17664 / CCUG 51855 / 37).